The chain runs to 209 residues: DNA ADP-ribosyl transferase (209 aa).

Positions 9 to 209 constitute a DarT domain; the sequence is TPIYHITHID…RVCIRKDWYY (201 aa). NAD(+) is bound by residues 13-15, glycine 22, and leucine 30; that span reads HIT. An NAD(+)-binding element region spans residues 35-53; the sequence is SPPKQRSIAYAHIQERRNR. Residues 44–50 mediate DNA binding; the sequence is YAHIQER. Arginine 51 serves as a coordination point for NAD(+). Catalysis depends on arginine 51, which acts as the Proton acceptor. 3 consecutive DNA-binding regions follow at residues 75-80, 145-148, and 154-158; these read RSPMLY, SYWA, and REKKQ. An ADP-ribosylating turn-turn loop region spans residues 116–160; the sequence is TDRHGVLSHARFFRQLEELAQLDWEAIQASYWADPPELREKKQAE. Residue glutamate 160 is part of the active site.

Belongs to the DarT ADP-ribosyltransferase family. In terms of assembly, interacts with cognate antitoxin DarG (via C-terminus); this heterodimeric complex neutralizes the toxic effect of DarT by preventing ssDNA binding to DarT and consequently inactivating the toxin by direct protein-protein interactions.

The catalysed reaction is a thymidine in DNA + NAD(+) = an N-(ADP-alpha-D-ribosyl)-thymidine in DNA + nicotinamide + H(+). Its function is as follows. Toxic component of the hybrid type II/IV toxin-antitoxin (TA) system DarTG, which plays a crucial role in controlling bacterial growth and bacteriophage infection. In case of phage infection, DarT toxin ADP-ribosylates DNA, which inhibits both viral DNA and RNA synthesis and leads to abortive infection. ADP-ribosylates ssDNA on the second thymidine of the consensus sequence 5'-TNTC-3'; the protein does not auto-modify. Arg-51 is highly flexible, allowing it to assume multiple positions in the crystal structures. Its toxic effect is neutralized by cognate antitoxin DarG. This chain is DNA ADP-ribosyl transferase, found in Thermus sp. (strain 2.9).